Here is a 1250-residue protein sequence, read N- to C-terminus: Cell adhesion molecule-related/down-regulated by oncogenes (1250 aa).

The first 24 residues, 1–24, serve as a signal peptide directing secretion; the sequence is MHPDLGPLWTLLYVLVILCSSVSS. At 25-962 the chain is on the extracellular side; sequence DLAPYFISEP…SPARSSDMLY (938 aa). 5 Ig-like C2-type domains span residues 28 to 113, 119 to 203, 224 to 302, 309 to 395, and 404 to 515; these read PYFI…ATVS, DFDS…LKVE, PALS…KHVT, EHAS…GRLQ, and PVIV…AFLT. Cys-49 and Cys-96 are oxidised to a cystine. N-linked (GlcNAc...) asparagine glycosylation is found at Asn-99, Asn-179, Asn-286, Asn-293, Asn-341, and Asn-426. Cystine bridges form between Cys-140-Cys-190 and Cys-242-Cys-289. Intrachain disulfides connect Cys-332–Cys-379 and Cys-425–Cys-499. Positions 524–534 are enriched in polar residues; that stretch reads KAESVTPSEAS. Positions 524 to 547 are disordered; that stretch reads KAESVTPSEASQNDERDPQDGSES. N-linked (GlcNAc...) asparagine glycosylation occurs at Asn-569. 3 Fibronectin type-III domains span residues 572–673, 719–814, and 822–922; these read VPDA…SKEK, APDR…VAGF, and PITG…TKVK. Asn-869 carries an N-linked (GlcNAc...) asparagine glycan. The interval 929 to 951 is disordered; that stretch reads DYPVKELSTPPSSSGNAGNVGPA. The helical transmembrane segment at 963 to 983 threads the bilayer; it reads LIVGCVLGVMVLILMVFIALC. The Cytoplasmic segment spans residues 984 to 1250; sequence LWKSRQQSTI…SVVLQQAQET (267 aa). 2 disordered regions span residues 1178-1208 and 1223-1250; these read DNISDINSDSTEDTAEFSRGDSSGHSEAEDK and DCGEKTARSPPGPPLDGLSVVLQQAQET. The segment covering 1193–1208 has biased composition (basic and acidic residues); it reads EFSRGDSSGHSEAEDK.

Part of a complex that contains BOC, CDON, NEO1, cadherins and CTNNB1. Interacts with NTN3. Interacts with DHH, IHH and SHH. In terms of processing, N-glycosylated. As to expression, highly expressed in somites and the dorsal lips of the neural tube during embryogenesis. Detected at very low levels in adult tissues.

It is found in the cell membrane. Functionally, component of a cell-surface receptor complex that mediates cell-cell interactions between muscle precursor cells. Promotes differentiation of myogenic cells. Required for response to NTN3 and activation of NFATC3. In Mus musculus (Mouse), this protein is Cell adhesion molecule-related/down-regulated by oncogenes (Cdon).